The primary structure comprises 103 residues: uncharacterized protein (103 aa).

The span at Met-1–Asn-10 shows a compositional bias: basic residues. Disordered stretches follow at residues Met-1 to Lys-38 and Ala-77 to Lys-103.

This is an uncharacterized protein from Schizosaccharomyces pombe (strain 972 / ATCC 24843) (Fission yeast).